The sequence spans 194 residues: NADH-quinone oxidoreductase subunit B (194 aa).

Pro residues predominate over residues 1–11 (MGVIATPPPSV). Positions 1-24 (MGVIATPPPSVQGPSSQVPSSAPI) are disordered. Over residues 12–21 (QGPSSQVPSS) the composition is skewed to low complexity. [4Fe-4S] cluster contacts are provided by C72, C73, C137, and C167.

This sequence belongs to the complex I 20 kDa subunit family. In terms of assembly, NDH-1 is composed of 14 different subunits. Subunits NuoB, C, D, E, F, and G constitute the peripheral sector of the complex. It depends on [4Fe-4S] cluster as a cofactor.

It localises to the cell inner membrane. The enzyme catalyses a quinone + NADH + 5 H(+)(in) = a quinol + NAD(+) + 4 H(+)(out). NDH-1 shuttles electrons from NADH, via FMN and iron-sulfur (Fe-S) centers, to quinones in the respiratory chain. The immediate electron acceptor for the enzyme in this species is believed to be ubiquinone. Couples the redox reaction to proton translocation (for every two electrons transferred, four hydrogen ions are translocated across the cytoplasmic membrane), and thus conserves the redox energy in a proton gradient. The sequence is that of NADH-quinone oxidoreductase subunit B from Rhodospirillum centenum (strain ATCC 51521 / SW).